Here is a 263-residue protein sequence, read N- to C-terminus: Bidirectional sugar transporter SWEET3 (263 aa).

Residues Met1 to Leu7 lie on the Extracellular side of the membrane. Residues Ser8 to Phe28 traverse the membrane as a helical segment. One can recognise a MtN3/slv 1 domain in the interval Ile9–Lys97. The Cytoplasmic segment spans residues Ser29–Cys42. The chain crosses the membrane as a helical span at residues Phe43 to Val63. The Extracellular segment spans residues Ser64–Pro71. A helical transmembrane segment spans residues Leu72–Tyr92. Over Tyr93–Gly103 the chain is Cytoplasmic. Residues Val104–Phe124 form a helical membrane-spanning segment. Residues Asp125–Ser132 lie on the Extracellular side of the membrane. The helical transmembrane segment at Phe133–Met153 threads the bilayer. Residues Phe133–Lys217 form the MtN3/slv 2 domain. Residues Lys154–Met165 lie on the Cytoplasmic side of the membrane. Residues Pro166 to Leu186 form a helical membrane-spanning segment. Residues Ser187–Leu190 are Extracellular-facing. The chain crosses the membrane as a helical span at residues Phe191–Phe211. The Cytoplasmic portion of the chain corresponds to Lys212 to Ile263.

It belongs to the SWEET sugar transporter family. In terms of assembly, forms heterooligomers with SWEET11, SWEET13 and SWEET17.

It is found in the cell membrane. Functionally, mediates both low-affinity uptake and efflux of sugar across the plasma membrane. The chain is Bidirectional sugar transporter SWEET3 from Arabidopsis thaliana (Mouse-ear cress).